Consider the following 436-residue polypeptide: GTPase Der (436 aa).

2 EngA-type G domains span residues 4 to 167 and 175 to 351; these read PVVA…PKDA and IKFS…DNHE. GTP-binding positions include 10-17, 57-61, 119-122, 181-188, 229-233, and 294-297; these read GRPNVGKS, DTGGI, NKVD, DTAGI, and NKWD. The 85-residue stretch at 352–436 folds into the KH-like domain; it reads QRISSAVLND…PIHIIERRRK (85 aa).

This sequence belongs to the TRAFAC class TrmE-Era-EngA-EngB-Septin-like GTPase superfamily. EngA (Der) GTPase family. Associates with the 50S ribosomal subunit.

GTPase that plays an essential role in the late steps of ribosome biogenesis. The chain is GTPase Der from Ligilactobacillus salivarius (strain UCC118) (Lactobacillus salivarius).